Here is a 495-residue protein sequence, read N- to C-terminus: Protein YhjJ (495 aa).

Positions 1–24 (MQGTKIRLLAGSLLMLASAGYVQA) are cleaved as a signal peptide.

Belongs to the peptidase M16 family.

The protein localises to the periplasm. This Salmonella typhi protein is Protein YhjJ (yhjJ).